We begin with the raw amino-acid sequence, 434 residues long: ATP-dependent protease ATPase subunit HslU (434 aa).

ATP contacts are provided by residues Ile-18, 60–65, Asp-247, Glu-312, and Arg-384; that span reads GVGKTE.

This sequence belongs to the ClpX chaperone family. HslU subfamily. In terms of assembly, a double ring-shaped homohexamer of HslV is capped on each side by a ring-shaped HslU homohexamer. The assembly of the HslU/HslV complex is dependent on binding of ATP.

The protein resides in the cytoplasm. Functionally, ATPase subunit of a proteasome-like degradation complex; this subunit has chaperone activity. The binding of ATP and its subsequent hydrolysis by HslU are essential for unfolding of protein substrates subsequently hydrolyzed by HslV. HslU recognizes the N-terminal part of its protein substrates and unfolds these before they are guided to HslV for hydrolysis. This Brucella melitensis biotype 2 (strain ATCC 23457) protein is ATP-dependent protease ATPase subunit HslU.